Here is a 237-residue protein sequence, read N- to C-terminus: Placenta-expressed transcript 1 protein (237 aa).

The N-terminal stretch at 1-27 (MLSLRSLLPHLGLFLCLALHLSPSLSA) is a signal peptide. N30, N67, N103, and N136 each carry an N-linked (GlcNAc...) asparagine glycan. Positions 145-162 (KMEQVQPSASTPIPESSE) are enriched in polar residues. Positions 145-170 (KMEQVQPSASTPIPESSETSQTINTT) are disordered. S218 carries the GPI-anchor amidated serine lipid modification. Residues 219 to 237 (PLAGALHILLVFLISKLLF) constitute a propeptide, removed in mature form.

Post-translationally, N-glycosylated. GPI-anchored. As to expression, present in hair follicle cells and sebaceous gland of skin, ciliated epithelial cells of trachea and bronchial tube, striated portion of submandibular gland, distal convoluted tubule cells of kidney, ciliated epithelial cells of oviduct, medulla of adrenal gland and anterior lobe of pituitary gland. Expressed in keratinocytes of the hair follicle at the trichilemmal zone corresponding to the terminally differentiated outermost suprabasal outer root sheath (ORS), including that of the sebaceous gland duct (SGD) and the directly adjacent upper distal end of the companion layer (CL). Expression is similar in all hair follicle growth stages. Also detected during both the early and late anagen phases above the bulge of stem cells. Expressed at the leading edge of the epidermal wound. Not expressed in the interfollicular epidermis (IFE), inner root sheath (IRS) and hair fiber. Highly expressed in placenta. Detected in mammary and prostate epithelia and in the pancreas (at protein level).

It is found in the apical cell membrane. Functionally, modulates leading keratinocyte migration and cellular adhesion to matrix proteins during a wound-healing response and promotes wound repair. May play a role during trichilemmal differentiation of the hair follicle. The sequence is that of Placenta-expressed transcript 1 protein (Plet1) from Mus musculus (Mouse).